A 989-amino-acid polypeptide reads, in one-letter code: Phosphoenolpyruvate carboxylase (989 aa).

Residues H175 and K630 contribute to the active site.

Belongs to the PEPCase type 1 family. Requires Mg(2+) as cofactor.

The enzyme catalyses oxaloacetate + phosphate = phosphoenolpyruvate + hydrogencarbonate. In terms of biological role, forms oxaloacetate, a four-carbon dicarboxylic acid source for the tricarboxylic acid cycle. In Prochlorococcus marinus (strain MIT 9301), this protein is Phosphoenolpyruvate carboxylase.